The primary structure comprises 453 residues: Odorant receptor 83a (453 aa).

Residues 1–28 are Cytoplasmic-facing; it reads MKSTFKEERIKDDSKRRDLFVFVRQTMC. A helical transmembrane segment spans residues 29–49; that stretch reads IAAMYPFGYYVNGSGVLAVLV. Residues 50 to 85 are Extracellular-facing; sequence RFCDLTYELFNYFVSVHIAGLYICTIYINYGQGDLD. Residues 86 to 106 traverse the membrane as a helical segment; sequence FFVNCLIQTIIYLWTIAMKLY. Residues 107 to 148 lie on the Cytoplasmic side of the membrane; the sequence is FRRFRPGLLNTILSNINDEYETRSAVGFSFVTMAGSYRMSKL. A helical transmembrane segment spans residues 149–169; the sequence is WIKTYVYCCYIGTIFWLALPI. The Extracellular segment spans residues 170–203; sequence AYRDRSLPLACWYPFDYTQPGVYEVVFLLQAMGQ. A helical membrane pass occupies residues 204–224; the sequence is IQVAASFASSSGLHMVLCVLI. Over 225 to 322 the chain is Cytoplasmic; sequence SGQYDVLFCS…ALKKIESFYS (98 aa). A helical transmembrane segment spans residues 323–343; that stretch reads PIWFVKIGEVTFLMCLVAFVS. At 344–359 the chain is on the extracellular side; the sequence is TKSTAANSFMRMVSLG. Residues 360 to 380 traverse the membrane as a helical segment; sequence QYLLLVLYELFIICYFADIVF. Over 381 to 408 the chain is Cytoplasmic; sequence QNSQRCGEALWRSPWQRHLKDVRSDYMF. A helical membrane pass occupies residues 409 to 429; that stretch reads FMLNSRRQFQLTAGKISNLNV. The Extracellular portion of the chain corresponds to 430-453; it reads DRFRGTITTAFSFLTLLQKMDARE.

It belongs to the insect chemoreceptor superfamily. Heteromeric odorant receptor channel (TC 1.A.69) family. Or2a subfamily. In terms of assembly, interacts with Orco. Complexes exist early in the endomembrane system in olfactory sensory neurons (OSNs), coupling these complexes to the conserved ciliary trafficking pathway.

Its subcellular location is the cell membrane. Odorant receptor which mediates acceptance or avoidance behavior, depending on its substrates. The odorant receptor repertoire encodes a large collection of odor stimuli that vary widely in identity, intensity, and duration. May form a complex with Orco to form odorant-sensing units, providing sensitive and prolonged odorant signaling and calcium permeability. Involved in the behavioral responses to pentanol, ethyl acetate, and propyl acetate. This chain is Odorant receptor 83a (Or83a), found in Drosophila melanogaster (Fruit fly).